The following is a 176-amino-acid chain: Large ribosomal subunit protein uL6 (176 aa).

This sequence belongs to the universal ribosomal protein uL6 family. Part of the 50S ribosomal subunit.

This protein binds to the 23S rRNA, and is important in its secondary structure. It is located near the subunit interface in the base of the L7/L12 stalk, and near the tRNA binding site of the peptidyltransferase center. The polypeptide is Large ribosomal subunit protein uL6 (Methanospirillum hungatei JF-1 (strain ATCC 27890 / DSM 864 / NBRC 100397 / JF-1)).